The primary structure comprises 305 residues: uncharacterized protein (305 aa).

10 helical membrane passes run 11-31 (LLLA…KAAL), 37-57 (LLFA…VALP), 70-90 (IYLV…TIGL), 97-117 (LFSA…WLWL), 126-146 (VIGL…GFGG), 148-168 (ISVI…LGTV), 180-200 (IWMV…SGFW), 217-237 (LLFI…TLVG), 244-264 (VASY…IFLH), and 265-285 (EPLT…ICLV). EamA domains are found at residues 18-141 (IMWG…VISA) and 161-287 (VSWA…LVNT).

It belongs to the EamA transporter family.

It localises to the cell membrane. This is an uncharacterized protein from Bacillus subtilis (strain 168).